A 499-amino-acid polypeptide reads, in one-letter code: Glutamyl-tRNA(Gln) amidotransferase subunit A (499 aa).

Residues Lys-80 and Ser-155 each act as charge relay system in the active site. Catalysis depends on Ser-179, which acts as the Acyl-ester intermediate.

This sequence belongs to the amidase family. GatA subfamily. Heterotrimer of A, B and C subunits.

It carries out the reaction L-glutamyl-tRNA(Gln) + L-glutamine + ATP + H2O = L-glutaminyl-tRNA(Gln) + L-glutamate + ADP + phosphate + H(+). In terms of biological role, allows the formation of correctly charged Gln-tRNA(Gln) through the transamidation of misacylated Glu-tRNA(Gln) in organisms which lack glutaminyl-tRNA synthetase. The reaction takes place in the presence of glutamine and ATP through an activated gamma-phospho-Glu-tRNA(Gln). This Cupriavidus metallidurans (strain ATCC 43123 / DSM 2839 / NBRC 102507 / CH34) (Ralstonia metallidurans) protein is Glutamyl-tRNA(Gln) amidotransferase subunit A.